The sequence spans 400 residues: 3-phenylpropionate/cinnamic acid dioxygenase ferredoxin--NAD(+) reductase component (400 aa).

5–36 contributes to the FAD binding site; the sequence is TIIIVGGGQAAAMAAASLRQQGFTGELHLFSD. NAD(+) is bound at residue 146 to 174; it reads SVVIVGAGTIGLELAASATQRRCKVTVIE.

It belongs to the bacterial ring-hydroxylating dioxygenase ferredoxin reductase family. As to quaternary structure, this dioxygenase system consists of four proteins: the two subunits of the hydroxylase component (HcaE and HcaF), a ferredoxin (HcaC) and a ferredoxin reductase (HcaD). The cofactor is FAD.

It carries out the reaction 2 reduced [2Fe-2S]-[ferredoxin] + NAD(+) + H(+) = 2 oxidized [2Fe-2S]-[ferredoxin] + NADH. The protein operates within aromatic compound metabolism; 3-phenylpropanoate degradation. Functionally, part of the multicomponent 3-phenylpropionate dioxygenase, that converts 3-phenylpropionic acid (PP) and cinnamic acid (CI) into 3-phenylpropionate-dihydrodiol (PP-dihydrodiol) and cinnamic acid-dihydrodiol (CI-dihydrodiol), respectively. The chain is 3-phenylpropionate/cinnamic acid dioxygenase ferredoxin--NAD(+) reductase component from Escherichia coli (strain 55989 / EAEC).